Consider the following 154-residue polypeptide: Small ribosomal subunit protein uS7 (154 aa).

Belongs to the universal ribosomal protein uS7 family.

This Nicotiana plumbaginifolia (Leadwort-leaved tobacco) protein is Small ribosomal subunit protein uS7 (RPS5).